A 76-amino-acid polypeptide reads, in one-letter code: ATP synthase subunit c (76 aa).

2 consecutive transmembrane segments (helical) span residues Val7–Ile27 and Phe50–Ile70.

It belongs to the ATPase C chain family. F-type ATPases have 2 components, F(1) - the catalytic core - and F(0) - the membrane proton channel. F(1) has five subunits: alpha(3), beta(3), gamma(1), delta(1), epsilon(1). F(0) has four main subunits: a(1), b(1), b'(1) and c(10-14). The alpha and beta chains form an alternating ring which encloses part of the gamma chain. F(1) is attached to F(0) by a central stalk formed by the gamma and epsilon chains, while a peripheral stalk is formed by the delta, b and b' chains.

It localises to the cell membrane. F(1)F(0) ATP synthase produces ATP from ADP in the presence of a proton or sodium gradient. F-type ATPases consist of two structural domains, F(1) containing the extramembraneous catalytic core and F(0) containing the membrane proton channel, linked together by a central stalk and a peripheral stalk. During catalysis, ATP synthesis in the catalytic domain of F(1) is coupled via a rotary mechanism of the central stalk subunits to proton translocation. Its function is as follows. Key component of the F(0) channel; it plays a direct role in translocation across the membrane. A homomeric c-ring of between 10-14 subunits forms the central stalk rotor element with the F(1) delta and epsilon subunits. The polypeptide is ATP synthase subunit c (Chloroflexus aurantiacus (strain ATCC 29366 / DSM 635 / J-10-fl)).